A 102-amino-acid polypeptide reads, in one-letter code: Co-chaperonin GroES (102 aa).

It belongs to the GroES chaperonin family. As to quaternary structure, heptamer of 7 subunits arranged in a ring. Interacts with the chaperonin GroEL.

The protein resides in the cytoplasm. In terms of biological role, together with the chaperonin GroEL, plays an essential role in assisting protein folding. The GroEL-GroES system forms a nano-cage that allows encapsulation of the non-native substrate proteins and provides a physical environment optimized to promote and accelerate protein folding. GroES binds to the apical surface of the GroEL ring, thereby capping the opening of the GroEL channel. This chain is Co-chaperonin GroES, found in Chlamydia trachomatis serovar D (strain ATCC VR-885 / DSM 19411 / UW-3/Cx).